Consider the following 264-residue polypeptide: Sororin (264 aa).

Residues 1–45 are disordered; the sequence is MAERRTRSGGAAQRSGPRTSLTKPSKSSKRKSGSDLPNSFSEIWP. Phosphoserine occurs at positions 20, 32, 34, 78, and 82. Positions 87 to 89 match the KEN box motif; the sequence is KEN. Residue Thr-97 is modified to Phosphothreonine. Position 106 is a phosphoserine (Ser-106). Phosphothreonine is present on residues Thr-110, Thr-114, and Thr-159. Residues 166–168 carry the FGF motif motif; that stretch reads FGF. Phosphoserine is present on Ser-222. Positions 242 to 264 are C-terminal Sororin domain; it reads LDKWAVAMNAEFEAAEQFELLIE.

The protein belongs to the sororin family. In terms of assembly, interacts with the APC/C complex. Interacts with the chromatin-bound cohesin complex; the interaction is indirect, occurs after DNA replication and requires acetylation of the cohesin component SMC3. Interacts (via the FGF motif) with PDS5A and PDS5B; the interaction is direct and prevents the interaction of PDS5A with WAPL. Phosphorylated. Phosphorylation, as cells enter mitosis, disrupts the interaction with PDS5A and relieves the inhibition of WAPL by CDCA5. In terms of processing, ubiquitinated by the APC/C complex in G1, leading to its degradation.

It localises to the nucleus. The protein resides in the chromosome. The protein localises to the cytoplasm. Functionally, regulator of sister chromatid cohesion in mitosis stabilizing cohesin complex association with chromatin. May antagonize the action of WAPL which stimulates cohesin dissociation from chromatin. Cohesion ensures that chromosome partitioning is accurate in both meiotic and mitotic cells and plays an important role in DNA repair. Required for efficient DNA double-stranded break repair. This chain is Sororin (Cdca5), found in Mus musculus (Mouse).